The following is a 715-amino-acid chain: Coiled-coil domain-containing protein 170 (715 aa).

3 coiled-coil regions span residues 30-286 (VTRE…AGQQ), 360-418 (ESRD…LVSG), and 478-656 (ENKT…FREV). The segment at 355-591 (MDSREESRDR…DLNKSRDQLE (237 aa)) is required for binding to microtubules and Golgi apparatus location.

Binds Golgi-associated microtubules.

The protein resides in the golgi apparatus. Its function is as follows. Plays a role in Golgi-associated microtubules organization and stabilization. This Homo sapiens (Human) protein is Coiled-coil domain-containing protein 170.